The primary structure comprises 153 residues: Glucose-6-phosphate 1-dehydrogenase (153 aa).

The NADP(+) site is built by Arg21 and Lys120. Position 120 (Lys120) interacts with D-glucose 6-phosphate.

The protein belongs to the glucose-6-phosphate dehydrogenase family.

It localises to the cytoplasm. The protein localises to the cytosol. The enzyme catalyses D-glucose 6-phosphate + NADP(+) = 6-phospho-D-glucono-1,5-lactone + NADPH + H(+). The protein operates within carbohydrate degradation; pentose phosphate pathway; D-ribulose 5-phosphate from D-glucose 6-phosphate (oxidative stage): step 1/3. Its function is as follows. Cytosolic glucose-6-phosphate dehydrogenase that catalyzes the first and rate-limiting step of the oxidative branch within the pentose phosphate pathway/shunt, an alternative route to glycolysis for the dissimilation of carbohydrates and a major source of reducing power and metabolic intermediates for fatty acid and nucleic acid biosynthetic processes. In Sarcophaga bullata (Grey flesh fly), this protein is Glucose-6-phosphate 1-dehydrogenase (ZW).